Reading from the N-terminus, the 77-residue chain is Large ribosomal subunit protein bL28 (77 aa).

Belongs to the bacterial ribosomal protein bL28 family.

The sequence is that of Large ribosomal subunit protein bL28 from Delftia acidovorans (strain DSM 14801 / SPH-1).